The chain runs to 349 residues: Isopentenyl-diphosphate delta-isomerase (349 aa).

9–10 (RK) is a binding site for substrate. Residues 65–67 (AMT), S95, and N124 contribute to the FMN site. 95–97 (STH) contacts substrate. Q154 contacts substrate. E155 is a Mg(2+) binding site. FMN contacts are provided by residues K186, S211, T216, 262–264 (GLR), and 283–284 (SR).

It belongs to the IPP isomerase type 2 family. As to quaternary structure, homooctamer. Dimer of tetramers. FMN serves as cofactor. Requires NADPH as cofactor. The cofactor is Mg(2+).

It is found in the cytoplasm. The enzyme catalyses isopentenyl diphosphate = dimethylallyl diphosphate. Functionally, involved in the biosynthesis of isoprenoids. Catalyzes the 1,3-allylic rearrangement of the homoallylic substrate isopentenyl (IPP) to its allylic isomer, dimethylallyl diphosphate (DMAPP). The sequence is that of Isopentenyl-diphosphate delta-isomerase from Staphylococcus epidermidis (strain ATCC 35984 / DSM 28319 / BCRC 17069 / CCUG 31568 / BM 3577 / RP62A).